A 399-amino-acid chain; its full sequence is Protein LIGULELESS 1 (399 aa).

Positions 1-28 (MMNLSAAANGRDEFPPYVVPSNAAAPPP) are disordered. Over residues 15 to 24 (PPYVVPSNAA) the composition is skewed to low complexity. The segment at 182–260 (PPRCQAEGCK…ADHNRRRRKS (79 aa)) adopts an SBP-type zinc-finger fold. 8 residues coordinate Zn(2+): Cys185, Cys190, Cys207, His210, Cys227, Cys230, His234, and Cys246. A Bipartite nuclear localization signal motif is present at residues 243–259 (KKSCRKRLADHNRRRRK). The interval 250-292 (LADHNRRRRKSKPSDADAGDKKRAHANKAAAAKDKAESSSKNM) is disordered. A compositionally biased stretch (basic and acidic residues) spans 261-270 (KPSDADAGDK).

Leaf ligular region, blade and sheath.

It is found in the nucleus. In terms of biological role, involved in the formation of ligules and auricles during leaf organogenesis. The polypeptide is Protein LIGULELESS 1 (LG1) (Zea mays (Maize)).